The following is a 1522-amino-acid chain: Histone-lysine N-methyltransferase EZH2 (1522 aa).

The disordered stretch occupies residues 1–196; the sequence is MSPARGDANA…PKTPTPKNTE (196 aa). Positions 39–61 are enriched in basic and acidic residues; it reads NRENLRDRDRADKLEKLEKDAHA. 2 stretches are compositionally biased toward low complexity: residues 64–76 and 103–130; these read QTQTQVQAPPVTV and RGSTSSTPTTTIPPLRPGRPSSPESPSL. Residues 141-162 are compositionally biased toward polar residues; it reads ILASRTSRFSNRTGIRDSQSPS. Residues 180–195 show a composition bias toward low complexity; sequence ATSNTPAPKTPTPKNT. The tract at residues 190–220 is SBD domain; the sequence is PTPKNTEWTVDKIASALSVLAEEVPQNHSRL. An EBD domain region spans residues 221 to 250; it reads VNFLLEETEKRAPQPRHLSKTDPFAHMKSK. The BAM domain stretch occupies residues 251-300; that stretch reads AIDANRPRPEGVPTMDVKFKQHSGEYGKSRNSGRRFQYPVVCIKPDREPV. The SAL domain stretch occupies residues 301 to 320; the sequence is PPYRFHHAEIRKNILALNSQ. An SRM domain region spans residues 321 to 360; it reads LNFVPHLRDVDPNSAEEQKYSAWLMDLENLDSKSGFKIQP. Residues 361-480 are SANT1L domain; sequence RSQKIAKRAQ…PIFDNKRAKD (120 aa). The segment at 406 to 426 is disordered; the sequence is PESDDSMTPQQKSNLLDTYSD. Residues 411–422 show a composition bias toward polar residues; sequence SMTPQQKSNLLD. The MCSS domain stretch occupies residues 481–560; sequence APGSQKPPDE…EQRQKTEGGS (80 aa). The Zn(2+) site is built by C508, C511, C516, H518, C570, C574, C615, C625, C685, H687, C691, C697, C699, C709, C713, C715, C720, C727, C729, C736, C746, C748, C755, C760, C763, and C784. The SANT2L domain stretch occupies residues 561–650; it reads ANAPPAHPPC…PVEPRTIPKQ (90 aa). The 123-residue stretch at 658–780 folds into the CXC domain; it reads RRKKQLMSDW…PENAYDEVLH (123 aa). The 125-residue stretch at 795–919 folds into the SET domain; that stretch reads KAVVLGKSQL…AGEELFFNYG (125 aa). S-adenosyl-L-homocysteine-binding residues include Y809, K852, S854, and Y855. The S-adenosyl-L-methionine site is built by Y809, K852, S854, Y855, N880, H881, and T926. H881 provides a ligand contact to S-adenosyl-L-homocysteine. K927 contacts S-adenosyl-L-homocysteine. The disordered stretch occupies residues 933 to 1522; that stretch reads NEQSGAETTP…KPARYRDEGE (590 aa). Over residues 935 to 946 the composition is skewed to polar residues; sequence QSGAETTPQQPK. Over residues 971 to 988 the composition is skewed to acidic residues; sequence GFDDDDRDGNDSDPDDLW. Low complexity predominate over residues 992-1024; it reads QQQQQQQQQQQQQQQQQQQQQQQQQQQQQQQQQ. The span at 1025–1038 shows a compositional bias: polar residues; that stretch reads AQKPQPSTSHQPQS. Residues 1053–1066 show a composition bias toward basic and acidic residues; the sequence is SPDKQLRRENHDAQ. Positions 1072–1091 are enriched in low complexity; the sequence is QFQQQEQQQQQQQQQQQQQQ. Residues 1127–1136 are compositionally biased toward polar residues; the sequence is DSSSGGSANE. A compositionally biased stretch (basic residues) spans 1142-1162; sequence KPSRRGGARPGAGRKPKHRPP. 2 stretches are compositionally biased toward basic and acidic residues: residues 1207–1221 and 1228–1238; these read SDSKDEAKEEETDKE and VNEKDREKGRD. Low complexity predominate over residues 1255–1299; the sequence is KSAPSPAKKQASSPTKISDSNRTTSKNTSSNNNNNTNNNNNNNNN. Positions 1316 to 1330 are enriched in polar residues; that stretch reads HLTNSQPAALSPSAT. 2 stretches are compositionally biased toward low complexity: residues 1355 to 1385 and 1415 to 1428; these read STMTTTTTTTTTTTSSSSSSSSSSSSSSSSS and SSSLSSSHSMSVFS. The segment covering 1455–1464 has biased composition (polar residues); the sequence is SGLNSTSLSQ. A compositionally biased stretch (basic and acidic residues) spans 1465–1494; sequence ERGEKHEKHEKEKPKEKKGEKERERERDRS.

It belongs to the class V-like SAM-binding methyltransferase superfamily. Histone-lysine methyltransferase family. EZ subfamily. As to quaternary structure, component of the polycomb repressive complex 2 (PRC2) that consists of four core subunits icluding EZH2, EED, SUZ12, and RBBP4, among which EZH2 is the catalytic subunit and which minimally requires EED and SUZ12 for catalysis.

The protein localises to the nucleus. The enzyme catalyses L-lysyl(27)-[histone H3] + 3 S-adenosyl-L-methionine = N(6),N(6),N(6)-trimethyl-L-lysyl(27)-[histone H3] + 3 S-adenosyl-L-homocysteine + 3 H(+). The end product of PRC2 catalysis, H3K27me3, interacts with EED to stimulate the enzymatic activity of PRC2 allosterically. The enzymatic activity of PRC2 is regulated in a very complex manner and PCR2 can adopt different stages including the autoinhibited (A); SAM-bound autoinhibited (A'), basal (B), and H3K27me3-stimulated (S) stages. Actictivity is inhibited by pyridone inhibitors such as GSK126. Functionally, catalytic subunit of the of the Polycomb Repressive Complex 2 (PRC2), a histone H3 lysine methyltransferase responsible for generating mono-, di-, and tri-methylation on Lys27 (H3K27me1, H3K27me2 and H3K27me3). The tri-methylated form is known to be critical in gene repression, and its proper placement is essential in defining repression patterns during development. The PRC2 complex interacts with thousands of RNA species in vivo, but the physiological function of RNA binding has still to be determined. The chain is Histone-lysine N-methyltransferase EZH2 from Chaetomium thermophilum (strain DSM 1495 / CBS 144.50 / IMI 039719) (Thermochaetoides thermophila).